The following is a 203-amino-acid chain: UPF0637 protein EF_3078 (203 aa).

The protein belongs to the UPF0637 family.

The protein is UPF0637 protein EF_3078 of Enterococcus faecalis (strain ATCC 700802 / V583).